Reading from the N-terminus, the 528-residue chain is Lanosterol 14-alpha demethylase (528 aa).

Residues 15-37 (LSLSVTQQISILLGVPFVYNLVW) form a helical membrane-spanning segment. An oteseconazole-binding site is contributed by Tyr-64. Tyr-118 lines the itraconazole pocket. Gly-307 provides a ligand contact to posaconazole. Residue His-377 coordinates oteseconazole. A heme-binding site is contributed by Cys-470.

Belongs to the cytochrome P450 family. Heme serves as cofactor.

The protein localises to the endoplasmic reticulum membrane. It carries out the reaction a 14alpha-methyl steroid + 3 reduced [NADPH--hemoprotein reductase] + 3 O2 = a Delta(14) steroid + formate + 3 oxidized [NADPH--hemoprotein reductase] + 4 H2O + 4 H(+). The enzyme catalyses a 14alpha-methyl steroid + reduced [NADPH--hemoprotein reductase] + O2 = a 14alpha-hydroxymethyl steroid + oxidized [NADPH--hemoprotein reductase] + H2O + H(+). The catalysed reaction is a 14alpha-hydroxymethyl steroid + reduced [NADPH--hemoprotein reductase] + O2 = a 14alpha-formyl steroid + oxidized [NADPH--hemoprotein reductase] + 2 H2O + H(+). It catalyses the reaction a 14alpha-formyl steroid + reduced [NADPH--hemoprotein reductase] + O2 = a Delta(14) steroid + formate + oxidized [NADPH--hemoprotein reductase] + H2O + 2 H(+). It carries out the reaction lanosterol + 3 reduced [NADPH--hemoprotein reductase] + 3 O2 = 4,4-dimethyl-5alpha-cholesta-8,14,24-trien-3beta-ol + formate + 3 oxidized [NADPH--hemoprotein reductase] + 4 H2O + 4 H(+). The enzyme catalyses lanosterol + reduced [NADPH--hemoprotein reductase] + O2 = 32-hydroxylanosterol + oxidized [NADPH--hemoprotein reductase] + H2O + H(+). The catalysed reaction is 32-hydroxylanosterol + reduced [NADPH--hemoprotein reductase] + O2 = 32-oxolanosterol + oxidized [NADPH--hemoprotein reductase] + 2 H2O + H(+). It catalyses the reaction 32-oxolanosterol + reduced [NADPH--hemoprotein reductase] + O2 = 4,4-dimethyl-5alpha-cholesta-8,14,24-trien-3beta-ol + formate + oxidized [NADPH--hemoprotein reductase] + H2O + 2 H(+). It carries out the reaction eburicol + 3 reduced [NADPH--hemoprotein reductase] + 3 O2 = 14-demethyleburicol + formate + 3 oxidized [NADPH--hemoprotein reductase] + 4 H2O + 4 H(+). The enzyme catalyses eburicol + reduced [NADPH--hemoprotein reductase] + O2 = 32-hydroxyeburicol + oxidized [NADPH--hemoprotein reductase] + H2O + H(+). The catalysed reaction is 32-hydroxyeburicol + reduced [NADPH--hemoprotein reductase] + O2 = 32-oxoeburicol + oxidized [NADPH--hemoprotein reductase] + 2 H2O + H(+). It catalyses the reaction 32-oxoeburicol + reduced [NADPH--hemoprotein reductase] + O2 = 14-demethyleburicol + formate + oxidized [NADPH--hemoprotein reductase] + H2O + 2 H(+). It participates in steroid biosynthesis; zymosterol biosynthesis; zymosterol from lanosterol: step 1/6. With respect to regulation, the catalytic activity is inhibited by the binding of azoles clotrimazole, miconazole, fluconazole, ketoconazole, oteseconazole (VT-1161), tetraconazole, the triazole SCH39304, and the triazole derivative ICI 153066. Sterol 14alpha-demethylase that plays a critical role in the third module of ergosterol biosynthesis pathway, being ergosterol the major sterol component in fungal membranes that participates in a variety of functions. The third module or late pathway involves the ergosterol synthesis itself through consecutive reactions that mainly occur in the endoplasmic reticulum (ER) membrane. In filamentous fungi, during the initial step of this module, lanosterol (lanosta-8,24-dien-3beta-ol) can be metabolized to eburicol. Sterol 14alpha-demethylase catalyzes the three-step oxidative removal of the 14alpha-methyl group (C-32) of both these sterols in the form of formate, and converts eburicol and lanosterol to 14-demethyleburicol (4,4,24-trimethylergosta-8,14,24(28)-trienol) and 4,4-dimethyl-5alpha-cholesta-8,14,24-trien-3beta-ol, respectively, which are further metabolized by other enzymes in the pathway to ergosterol. Can also use substrates not intrinsic to fungi, such as 24,25-dihydrolanosterol (DHL), producing 4,4-dimethyl-8,14-cholestadien-3-beta-ol, but at lower rates than the endogenous substrates. This chain is Lanosterol 14-alpha demethylase, found in Candida albicans (strain SC5314 / ATCC MYA-2876) (Yeast).